A 180-amino-acid polypeptide reads, in one-letter code: MRITVSGLPGSGTTTVSKLLAEYYELELISSGEIFRRIAREKEMSLAEFGAMAEKDPSIDLAIDKNQREVIHSHEKLILESRLAGHMAKEVPNVLKIWIKAPLPVRVKRILRREKSVSFDEELERTVEREKSEALRYMNYYNIDIDDLSIYDIVIDSEKWNQYQILDILKVAIDSLVGPE.

7-15 (GLPGSGTTT) contacts ATP.

The protein belongs to the cytidylate kinase family. Type 2 subfamily.

Its subcellular location is the cytoplasm. It catalyses the reaction CMP + ATP = CDP + ADP. The catalysed reaction is dCMP + ATP = dCDP + ADP. The polypeptide is Cytidylate kinase (Methanosarcina barkeri (strain Fusaro / DSM 804)).